The primary structure comprises 410 residues: Sprouty-related, EVH1 domain-containing protein 2 (410 aa).

Residues 5 to 122 (THPDDDSYIV…RGVRKAIEDL (118 aa)) enclose the WH1 domain. The disordered stretch occupies residues 127-171 (TTSSSTIHNEAELGDDDVFTTATDSSSNSSQKREPNTRTISSPTS). Residues 146 to 156 (TTATDSSSNSS) show a composition bias toward polar residues. A KBD domain is found at 197-252 (SYPQVTFPEDDEEIVRINPREKIWMTGYEDYRHAPVRGKYLDSTEDADSYVRFAKG). A phosphotyrosine mark is found at Tyr-224 and Tyr-227. A disordered region spans residues 274–294 (DPKGNVIKTQPPRAKSRRRKE). An SPR domain is found at 300–408 (RCVYCRDMFN…CRCCGGKHKA (109 aa)).

In terms of assembly, homodimer and heterodimer. Able to interact with SPRED1 to form heterodimers. Interacts with RAS. May interact with ZDHHC13 (via ANK repeats) and ZDHHC17 (via ANK repeats). Interacts with TESK1. Interacts with NF1. Post-translationally, phosphorylated on serine and threonine residues. Phosphorylated on tyrosine. Phosphorylation of Tyr-224 and Tyr-227 are required for ubiquitination. In terms of processing, ubiquitinated; leading to degradation by the proteasome. In terms of tissue distribution, expressed in the eye, with higher expression in lens epithelium than in lens fiber cells at postnatal day 15.

It localises to the cell membrane. The protein resides in the cytoplasmic vesicle. The protein localises to the secretory vesicle membrane. Its subcellular location is the cytoplasm. Functionally, negatively regulates Ras signaling pathways and downstream activation of MAP kinases. Recruits and translocates NF1 to the cell membrane, thereby enabling NF1-dependent hydrolysis of active GTP-bound Ras to inactive GDP-bound Ras. Inhibits fibroblast growth factor (FGF)-induced retinal lens fiber differentiation, probably by inhibiting FGF-mediated phosphorylation of ERK1/2. Inhibits TGFB-induced epithelial-to-mesenchymal transition in lens epithelial cells. The polypeptide is Sprouty-related, EVH1 domain-containing protein 2 (Spred2) (Rattus norvegicus (Rat)).